Consider the following 54-residue polypeptide: MELSFIHGKNCLPLYCILLELLKNYFKLGPVDFSLSLRKILATLNPQEIPKLFI.

This is an uncharacterized protein from Haemophilus influenzae (strain ATCC 51907 / DSM 11121 / KW20 / Rd).